We begin with the raw amino-acid sequence, 471 residues long: Glutamyl-tRNA(Gln) amidotransferase subunit A, mitochondrial (471 aa).

Catalysis depends on charge relay system residues lysine 64 and serine 141. The Acyl-ester intermediate role is filled by serine 165.

Belongs to the amidase family. GatA subfamily. In terms of assembly, subunit of the heterotrimeric GatCAB amidotransferase (AdT) complex, composed of A, B and C subunits.

It is found in the mitochondrion. It catalyses the reaction L-glutamyl-tRNA(Gln) + L-glutamine + ATP + H2O = L-glutaminyl-tRNA(Gln) + L-glutamate + ADP + phosphate + H(+). Functionally, allows the formation of correctly charged Gln-tRNA(Gln) through the transamidation of misacylated Glu-tRNA(Gln) in the mitochondria. The reaction takes place in the presence of glutamine and ATP through an activated gamma-phospho-Glu-tRNA(Gln). The chain is Glutamyl-tRNA(Gln) amidotransferase subunit A, mitochondrial from Schizosaccharomyces pombe (strain 972 / ATCC 24843) (Fission yeast).